Here is a 568-residue protein sequence, read N- to C-terminus: Probable WRKY transcription factor 34 (568 aa).

Residues 172–236 constitute a DNA-binding region (WRKY 1); sequence ACCAPADDGY…YTGDHIHSKP (65 aa). Residues Cys-203, Cys-208, His-231, and His-233 each coordinate Zn(2+). 2 disordered regions span residues 230 to 252 and 337 to 360; these read DHIHSKPPPNRRSGIGSSGTGQD and KRRKLEAYATETSGSTRASREPRV. Residues 366 to 431 constitute a DNA-binding region (WRKY 2); that stretch reads SDIDILDDGY…YIGKHTHVVP (66 aa). Zn(2+) contacts are provided by Cys-397, Cys-402, His-426, and His-428.

The protein belongs to the WRKY group I family.

The protein resides in the nucleus. Its function is as follows. Transcription factor. Interacts specifically with the W box (5'-(T)TGAC[CT]-3'), a frequently occurring elicitor-responsive cis-acting element. The polypeptide is Probable WRKY transcription factor 34 (WRKY34) (Arabidopsis thaliana (Mouse-ear cress)).